The sequence spans 425 residues: Cyclin-K (425 aa).

The tract at residues Gly-262–Leu-425 is disordered. Positions Ala-366–Ala-377 are enriched in low complexity. The span at Gly-379 to Thr-399 shows a compositional bias: pro residues.

The protein belongs to the cyclin family.

It is found in the nucleus. Regulatory subunit of cyclin-dependent kinases that mediates activation of target kinases. Plays a role in transcriptional regulation via its role in regulating the phosphorylation of the C-terminal domain (CTD) of the large subunit of RNA polymerase II (POLR2A). The chain is Cyclin-K (ccnk) from Danio rerio (Zebrafish).